Reading from the N-terminus, the 259-residue chain is Dickkopf-related protein 2 (259 aa).

An N-terminal signal peptide occupies residues Met-1–Ala-33. N-linked (GlcNAc...) asparagine glycosylation occurs at Asn-52. A DKK-type Cys-1 region spans residues Cys-78 to Cys-127. 5 disulfide bridges follow: Cys-183–Cys-195, Cys-189–Cys-204, Cys-194–Cys-231, Cys-214–Cys-239, and Cys-233–Cys-256. The segment at Cys-183–Cys-256 is DKK-type Cys-2.

The protein belongs to the dickkopf family. As to quaternary structure, interacts with LRP5 and LRP6. Post-translationally, may be proteolytically processed by a furin-like protease. Expressed in heart, brain, skeletal muscle and lung.

The protein resides in the secreted. Antagonizes canonical Wnt signaling by inhibiting LRP5/6 interaction with Wnt and by forming a ternary complex with the transmembrane protein KREMEN that promotes internalization of LRP5/6. DKKs play an important role in vertebrate development, where they locally inhibit Wnt regulated processes such as antero-posterior axial patterning, limb development, somitogenesis and eye formation. In the adult, Dkks are implicated in bone formation and bone disease, cancer and Alzheimer disease. The chain is Dickkopf-related protein 2 (DKK2) from Homo sapiens (Human).